The following is a 323-amino-acid chain: Thymidylate synthase (323 aa).

DUMP-binding positions include Arg-21 and 172–173; that span reads RR. Cys-192 functions as the Nucleophile in the catalytic mechanism. DUMP contacts are provided by residues 214–217, Asn-225, and 255–257; these read RSND and HVY. A (6R)-5,10-methylene-5,6,7,8-tetrahydrofolate-binding site is contributed by Asp-217. A (6R)-5,10-methylene-5,6,7,8-tetrahydrofolate-binding site is contributed by Ala-322.

This sequence belongs to the thymidylate synthase family. Bacterial-type ThyA subfamily. As to quaternary structure, homodimer.

The protein resides in the cytoplasm. It catalyses the reaction dUMP + (6R)-5,10-methylene-5,6,7,8-tetrahydrofolate = 7,8-dihydrofolate + dTMP. The protein operates within pyrimidine metabolism; dTTP biosynthesis. In terms of biological role, catalyzes the reductive methylation of 2'-deoxyuridine-5'-monophosphate (dUMP) to 2'-deoxythymidine-5'-monophosphate (dTMP) while utilizing 5,10-methylenetetrahydrofolate (mTHF) as the methyl donor and reductant in the reaction, yielding dihydrofolate (DHF) as a by-product. This enzymatic reaction provides an intracellular de novo source of dTMP, an essential precursor for DNA biosynthesis. This Pseudomonas syringae pv. tomato (strain ATCC BAA-871 / DC3000) protein is Thymidylate synthase.